Consider the following 345-residue polypeptide: L-Ala-D/L-Glu epimerase (345 aa).

2 residues coordinate substrate: threonine 134 and lysine 159. The active-site Proton acceptor; specific for (R)-substrate epimerization is the lysine 161. Aspartate 188 serves as a coordination point for Mg(2+). Asparagine 190 contributes to the substrate binding site. Mg(2+) contacts are provided by glutamate 216 and aspartate 241. Lysine 265 acts as the Proton acceptor; specific for (S)-substrate epimerization in catalysis. Substrate is bound by residues cysteine 292, aspartate 317, and aspartate 319.

Belongs to the mandelate racemase/muconate lactonizing enzyme family. Mg(2+) serves as cofactor.

It catalyses the reaction L-alanyl-L-glutamate = L-alanyl-D-glutamate. The protein operates within cell wall degradation; peptidoglycan degradation. In terms of biological role, catalyzes the epimerization of L-Ala-D-Glu to L-Ala-L-Glu and has probably a role in the metabolism of the murein peptide, of which L-Ala-D-Glu is a component. Is also able to catalyze the reverse reaction and the epimerization of a broad range of other dipeptides; is most efficient with L-Ala-D/L-Phe, L-Ala-D/L-Tyr, and L-Ala-D/L-His. This Thermotoga maritima (strain ATCC 43589 / DSM 3109 / JCM 10099 / NBRC 100826 / MSB8) protein is L-Ala-D/L-Glu epimerase.